The primary structure comprises 301 residues: Glycine--tRNA ligase alpha subunit (301 aa).

It belongs to the class-II aminoacyl-tRNA synthetase family. In terms of assembly, tetramer of two alpha and two beta subunits.

The protein resides in the cytoplasm. The enzyme catalyses tRNA(Gly) + glycine + ATP = glycyl-tRNA(Gly) + AMP + diphosphate. The protein is Glycine--tRNA ligase alpha subunit of Shewanella halifaxensis (strain HAW-EB4).